A 1097-amino-acid chain; its full sequence is MAIPGRGDVPRDPEEVLNDAKDFLGQYFASIRRANTPAHEARWKIVQEEVATTGTYQLTTTELVFGAKLAWRNASRCIGRIQWSKLQVFDCRQVTTTSGMFEALCNHIKYSTNKGNIRSAITLFPQRTDGKHDYRIWNSQLISYAGYRQPDGTVLGDPMHCEFTDLCLKLGWKPPRTAWDILPLVLSANGKDPDYFEIPRELVMEIHMTHPTFEWFKELELRWYALPAVSSMRFDCGGIEFTANAFNGWYMSTEIGCRNFCDTNRLNVLEKIAQNMGLDTRTPVNLWKDKALVEVNVAVLHSFQQHNATIVDHHTASESFIKHLDNENRLRSGCPADWIWIVPPMSSSITPVFHQEMALYYLKPSYEYQEPAWKTHQWQKSKPITGKRPINRKFHFKQIARAVKFTSKLFGRALSKRIKATVLYATETGKSEQYAKELGVIFGHAFNAQVHCMADYDITSIEHEALLLVVTSTFGNGDPPENGVAFGEHLCEILYADQVGEDSTGNQMLTPKSFIKANSDIQRYTAGNPKKLNRLESLKGSTTDATSIDSFGPLSNVRFAVFALGSSAYPNFCNFGKYVDKLLVDLGGERIHDLATGDEMCGQDQAFRKWASSVFNVACETFCLDDDETLQEAKRALGTVALSEETVQFARAGCRPATLHAALQKSLNKQFVSCTVKANKDLGDASAERSTIFIDLEPKEEIKYNPGDHVGIIACNRKELVESLLSRIKDVDDYDEPLQLQLLKETHTSSGLVKSWEPHEKLPIMSVRELFTRFLDITTPPTTILLQYLATTCEDEEEKKQLNVLATDPGAYEDWRHFHFPTLPEVLDQFPSARPNASLLAALLSPLQPRFYSISSSPLAHAKRLHLTVAVVTYRTQDGEGPVHYGVCSNYLMERKPGDEVYLFIRSAPNFHLPQDLSVPLILIGPGTGIAPFRGFWHHRRALQNSCSRTTTGPVWLFFGCRTKTMDLYREEKEQALKEGVLSKVFLALSREKEVPKTYVQEVAENVGAEIHDLLINKGAHFYVCGDCKMAEDVHQKLKGIVKKHGNMTDEQVQNFMFMLKEENRYHEDIFGITLRTAEVHSASRESARRNRVASQP.

Cys77 provides a ligand contact to heme b. Gln140, Trp249, Tyr250, Glu254, and Asn259 together coordinate L-arginine. (6R)-L-erythro-5,6,7,8-tetrahydrobiopterin is bound by residues Trp340 and Phe353. Tyr368 contacts heme b. The interval 387–410 is calmodulin-binding; the sequence is KRPINRKFHFKQIARAVKFTSKLF. The region spanning 420 to 615 is the Flavodoxin-like domain; it reads ATVLYATETG…AFRKWASSVF (196 aa). Residues 426–430 and 561–592 each bind FMN; these read TETGK and VFALGSSAYPNFCNFGKYVDKLLVDLGGERIH. The FAD-binding FR-type domain occupies 669–914; sequence KQFVSCTVKA…IRSAPNFHLP (246 aa). FAD contacts are provided by residues 704 to 715 and 847 to 857; these read YNPGDHVGIIAC and LQPRFYSISSS. Residues 922–940 and 1019–1034 contribute to the NADP(+) site; these read ILIGPGTGIAPFRGFWHHR and GAHFYVCGDCKMAEDV.

Belongs to the NOS family. Heme b is required as a cofactor. FAD serves as cofactor. It depends on FMN as a cofactor.

It catalyses the reaction 2 L-arginine + 3 NADPH + 4 O2 + H(+) = 2 L-citrulline + 2 nitric oxide + 3 NADP(+) + 4 H2O. Functionally, produces nitric oxide (NO) which is a messenger molecule with diverse functions throughout the body. The sequence is that of Nitric oxide synthase-like protein from Bombyx mori (Silk moth).